The sequence spans 129 residues: Small ribosomal subunit protein uS9 (129 aa).

It belongs to the universal ribosomal protein uS9 family.

This is Small ribosomal subunit protein uS9 from Helicobacter pylori (strain HPAG1).